Reading from the N-terminus, the 3655-residue chain is NuA4 acetyltransferase complex subunit Tra2 (3655 aa).

Residues 8-2459 (SLSSSIELLK…REYHIRLLGK (2452 aa)) are HEAT. 26 HEAT repeats span residues 46 to 89 (QLYA…CAHR), 94 to 131 (QYAQSCVLSFISLIKADNEEVAVFCLKVIMDIFKTFKF), 149 to 188 (TNLPYLIPSIFVENPKSNEEENTTLAFGSYLSTETSIIQQ), 230 to 268 (PGVQAIIPCFLKMVQIDVPIDIASYAMIEKDSSIDFIEF), 300 to 338 (LSEKDIIPDIVIKLLRRCPFDMCFARKELLVATRHILST), 374 to 412 (STLADLLHHVRDELNETQIRKSIMIYSTNMHDLTLSIGL), 438 to 475 (FLLLSIFDSFVNKFSELNDSLDQFFKKKYEEEIKETKS), 606 to 643 (IFLKVFETNLPTFFDQLKKNLTLFHIPQFLLSNESTSS), 644 to 683 (KFLNILLRFLLSRIEELGSSDIRHGSVLLRLFRLSFVTVS), 735 to 772 (SLYKEVMPLLHALLEAFNSLLISARTPKEKDLFTELCL), 783 to 820 (PYMSYLMRPLVMSLKSSQELVSQGLRTFELCLDNLTPD), 828 to 867 (PYIEDLMNALWSHLQPLPYNYNHSHTALKILGKLGGRNRK), 1100 to 1141 (AFIL…QDHS), 1147 to 1184 (DRQVDILTALFFTLKDTTSEVPTVCKDHVMDVLKQLFR), 1193 to 1230 (EIAPGILGHLVLELSNHNSVVRSSTQKLLSLLSELSNT), 1429 to 1470 (RKLL…LFHL), 1665 to 1704 (NLVSDLTAHLVKKIEEPDLENNVKLILNLILSKDYGFLLK), 1709 to 1746 (GILLTYLNQNVSSLEKCNQIFSIFYEVFFQHPSTNVYA), 1753 to 1790 (IGALQIISFFLKNVPEITVQHQTEMLKMCSLFGNSEDV), 1808 to 1846 (QFPYELVNVVYMALLKSSPIEVRHLVKSSFDNIFSYIFS), 1891 to 1934 (EHRG…WNDL), 1973 to 2011 (SEAISLLERLLSSGTWASLGMKLSFFTKSITHFDATDAN), 2036 to 2073 (ENLSDLKFLLEKSLENESVGVQSAIGNFVSTILTLSNT), 2120 to 2157 (DALHTLLPGFMRCFHKVAKEFLSLGSQPSGNSLNLQIV), 2183 to 2221 (DQRRWFLSALVQIIEKSSSYEICNYLLEIVRGWIMNSPV), and 2401 to 2438 (DFVLPVLSLQFSNSKIAEYLWRDFFNASVCSFTKDEIP). The segment at 2460–3655 (TPNVLETILT…QMDQLWQAWL (1196 aa)) is head. The 562-residue stretch at 2484–3045 (LLVYLSKTYG…HFQLRTAYED (562 aa)) folds into the FAT domain. Positions 3059-3105 (RGNSRLRENDSSSDNKSKDLSPSGSFSSVSQFNSKNGSPSSIDSSEK) are disordered. The segment covering 3063–3077 (RLRENDSSSDNKSKD) has biased composition (basic and acidic residues). Residues 3078–3092 (LSPSGSFSSVSQFNS) show a composition bias toward low complexity. The 341-residue stretch at 3285 to 3625 (VPNVDLVRGH…VISHNVPEDL (341 aa)) folds into the PI3K/PI4K catalytic domain. The tract at residues 3291–3297 (VRGHTMC) is G-loop. A catalytic loop region spans residues 3491–3499 (NIGGRSPQK). The segment at 3511 to 3536 (SQDLLPSMTSNQPVFHNTEAVPFRLT) is activation loop. An FATC domain is found at 3623 to 3655 (EDLPLNQTLVDLVSQATNPQQLAQMDQLWQAWL).

This sequence belongs to the PI3/PI4-kinase family. TRA1 subfamily. Component of the NuA4 acetyltransferase complex. Tra1 is the scaffold subunit for binding to a variety of transcription activators or transcription factors to recruit NuA4 for targeted gene activation. Requires Hsp90 and its co-chaperone, the Triple-T complex (TTT), for its incorporation into NuA4. Interacts with tel2.

Its function is as follows. Component of the NuA4 histone H4/H2A acetyltransferase involved in transcription and DNA repair. The protein is NuA4 acetyltransferase complex subunit Tra2 of Schizosaccharomyces pombe (strain 972 / ATCC 24843) (Fission yeast).